A 199-amino-acid chain; its full sequence is N-(5'-phosphoribosyl)anthranilate isomerase (199 aa).

The protein belongs to the TrpF family.

The enzyme catalyses N-(5-phospho-beta-D-ribosyl)anthranilate = 1-(2-carboxyphenylamino)-1-deoxy-D-ribulose 5-phosphate. Its pathway is amino-acid biosynthesis; L-tryptophan biosynthesis; L-tryptophan from chorismate: step 3/5. This is N-(5'-phosphoribosyl)anthranilate isomerase from Lacticaseibacillus paracasei (strain ATCC 334 / BCRC 17002 / CCUG 31169 / CIP 107868 / KCTC 3260 / NRRL B-441) (Lactobacillus paracasei).